Reading from the N-terminus, the 63-residue chain is Large ribosomal subunit protein uL29 (63 aa).

Belongs to the universal ribosomal protein uL29 family.

In Shewanella frigidimarina (strain NCIMB 400), this protein is Large ribosomal subunit protein uL29.